The chain runs to 304 residues: Acetylglutamate kinase (304 aa).

Residues 74–75 (GG), arginine 96, and asparagine 201 each bind substrate.

The protein belongs to the acetylglutamate kinase family. ArgB subfamily.

It is found in the cytoplasm. The catalysed reaction is N-acetyl-L-glutamate + ATP = N-acetyl-L-glutamyl 5-phosphate + ADP. It functions in the pathway amino-acid biosynthesis; L-arginine biosynthesis; N(2)-acetyl-L-ornithine from L-glutamate: step 2/4. Catalyzes the ATP-dependent phosphorylation of N-acetyl-L-glutamate. The sequence is that of Acetylglutamate kinase from Alkalilimnicola ehrlichii (strain ATCC BAA-1101 / DSM 17681 / MLHE-1).